Here is a 393-residue protein sequence, read N- to C-terminus: MESLLSSSSLVSAAGGFCWKKQNLKLHSLSEIRVLRCDSSKVVAKPKFRNNLVRPDGQGSSLLLYPKHKSRFRVNATAGQPEAFDSNSKQKSFRDSLDAFYRFSRPHTVIGTVLSILSVSFLAVEKVSDISPLLFTGILEAVVAALMMNIYIVGLNQLSDVEIDKVNKPYLPLASGEYSVNTGIAIVASFSIMSFWLGWIVGSWPLFWALFVSFMLGTAYSINLPLLRWKRFALVAAMCILAVRAIIVQIAFYLHIQTHVFGRPILFTRPLIFATAFMSFFSVVIALFKDIPDIEGDKIFGIRSFSVTLGQKRVFWTCVTLLQMAYAVAILVGATSPFIWSKVISVVGHVILATTLWARAKSVDLSSKTEITSCYMFIWKLFYAEYLLLPFLK.

A chloroplast-targeting transit peptide spans 1–36 (MESLLSSSSLVSAAGGFCWKKQNLKLHSLSEIRVLR). The next 9 membrane-spanning stretches (helical) occupy residues 108 to 128 (TVIGTVLSILSVSFLAVEKVS), 133 to 153 (LLFTGILEAVVAALMMNIYIV), 170 to 190 (YLPLASGEYSVNTGIAIVASF), 205 to 227 (PLFWALFVSFMLGTAYSINLPLL), 232 to 252 (FALVAAMCILAVRAIIVQIAF), 271 to 291 (LIFATAFMSFFSVVIALFKDI), 314 to 334 (VFWTCVTLLQMAYAVAILVGA), 338 to 358 (FIWSKVISVVGHVILATTLWA), and 371 to 391 (ITSCYMFIWKLFYAEYLLLPF).

The protein belongs to the UbiA prenyltransferase family.

It localises to the plastid. The protein localises to the chloroplast membrane. The catalysed reaction is phytyl diphosphate + homogentisate + H(+) = 2-methyl-6-phytyl-1,4-benzene-1,4-diol + CO2 + diphosphate. It participates in cofactor biosynthesis; tocopherol biosynthesis. Involved in the synthesis of tocopherol (vitamin E). Catalyzes the condensation of homogentisate and phytyl diphosphate to form dimethylphytylhydrquinone. Low activity with geranylgeranyl diphosphate as substrate, but no activity with farnesyl diphosphate or solanesyl diphosphate. Tocopherol functions to limit lipid oxidation during seed desiccation, quiescence and germination and early seedling development. Protects thylakoid membrane lipids from photooxidation and is required for low-temperature adaptation. The sequence is that of Homogentisate phytyltransferase 1, chloroplastic (HPT1) from Arabidopsis thaliana (Mouse-ear cress).